Reading from the N-terminus, the 417-residue chain is Transmembrane protease serine 11G (417 aa).

Topologically, residues 1 to 22 (MYQPGILGRRKRVCKPWTVALT) are cytoplasmic. The helical; Signal-anchor for type II membrane protein transmembrane segment at 23–43 (TTAALLALAVLIGLLVYFLVY) threads the bilayer. At 44–417 (EEKTHYYQAS…RNWIKSKTNI (374 aa)) the chain is on the extracellular side. Residues 46–165 (KTHYYQASFW…PYLREMNAAQ (120 aa)) enclose the SEA domain. One can recognise a Peptidase S1 domain in the interval 186–416 (IADGKPAGSN…YRNWIKSKTN (231 aa)). A disulfide bond links C211 and C227. Catalysis depends on charge relay system residues H226 and D271. Disulfide bonds link C336–C352 and C363–C392. S367 functions as the Charge relay system in the catalytic mechanism.

Belongs to the peptidase S1 family. Highest expression in lung and tongue. Also expressed in brain, colon, heart and liver. Isoform 1 is the predominant form in tongue whereas both isoforms are expressed in similar amounts in lung. At the cellular level, expression is confined to epithelial cells within the cleft of the circumvallate papillae extending into the ducts of the minor salivary glands, the respiratory epithelium of the nasal cavity and tear gland ducts.

The protein resides in the membrane. The sequence is that of Transmembrane protease serine 11G (Tmprss11g) from Rattus norvegicus (Rat).